Here is a 388-residue protein sequence, read N- to C-terminus: Succinate--CoA ligase [ADP-forming] subunit beta (388 aa).

The ATP-grasp domain maps to 9-244 (KALFAEYGLP…PSQDDAREAH (236 aa)). ATP-binding positions include Lys46, 53-55 (GRG), Glu99, Thr102, and Glu107. 2 residues coordinate Mg(2+): Asn199 and Asp213. Residues Asn264 and 321–323 (GIV) contribute to the substrate site.

It belongs to the succinate/malate CoA ligase beta subunit family. Heterotetramer of two alpha and two beta subunits. Requires Mg(2+) as cofactor.

The catalysed reaction is succinate + ATP + CoA = succinyl-CoA + ADP + phosphate. It catalyses the reaction GTP + succinate + CoA = succinyl-CoA + GDP + phosphate. It participates in carbohydrate metabolism; tricarboxylic acid cycle; succinate from succinyl-CoA (ligase route): step 1/1. Succinyl-CoA synthetase functions in the citric acid cycle (TCA), coupling the hydrolysis of succinyl-CoA to the synthesis of either ATP or GTP and thus represents the only step of substrate-level phosphorylation in the TCA. The beta subunit provides nucleotide specificity of the enzyme and binds the substrate succinate, while the binding sites for coenzyme A and phosphate are found in the alpha subunit. This chain is Succinate--CoA ligase [ADP-forming] subunit beta, found in Shewanella loihica (strain ATCC BAA-1088 / PV-4).